The sequence spans 195 residues: uncharacterized protein (195 aa).

The N-terminal stretch at 1 to 20 is a signal peptide; that stretch reads MLKFRLILTVLTVLLITVNG. The interval 26 to 195 is disordered; sequence IENKSSTSSS…LHNQYPPQQN (170 aa). N-linked (GlcNAc...) asparagine glycosylation occurs at asparagine 28. 2 stretches are compositionally biased toward low complexity: residues 29–43 and 74–104; these read KSST…SKPS and QSKT…GGNQ. Polar residues-rich tracts occupy residues 112–123 and 151–176; these read DPYQTGSYQGPY and PKNT…NNGP.

In terms of tissue distribution, component of the acid-soluble organic matrix of calcified layers of the shell (at protein level).

Its subcellular location is the secreted. This is an uncharacterized protein from Lottia gigantea (Giant owl limpet).